Reading from the N-terminus, the 658-residue chain is Integrator complex subunit 9 (658 aa).

2 residues coordinate 1D-myo-inositol hexakisphosphate: Lys2 and Phe19. Residue Lys58 forms a Glycyl lysine isopeptide (Lys-Gly) (interchain with G-Cter in SUMO2) linkage. 1D-myo-inositol hexakisphosphate-binding residues include Lys510 and Arg511. Residues Asp548–Asp574 form a disordered region. The Nuclear localization signal signature appears at Lys566–Arg570.

This sequence belongs to the metallo-beta-lactamase superfamily. RNA-metabolizing metallo-beta-lactamase-like family. INTS9 subfamily. In terms of assembly, component of the Integrator complex, composed of core subunits INTS1, INTS2, INTS3, INTS4, INTS5, INTS6, INTS7, INTS8, INTS9/RC74, INTS10, INTS11/CPSF3L, INTS12, INTS13, INTS14 and INTS15. The core complex associates with protein phosphatase 2A subunits PPP2CA and PPP2R1A, to form the Integrator-PP2A (INTAC) complex. INTS9 is part of the RNA endonuclease subcomplex, composed of INTS4, INTS9, INTS11 and inositol hexakisphosphate (InsP6). Interacts with WDR73; interaction is required for the assembly of the RNA endonuclease subcomplex in the cytoplasm. Interacts with BRAT1; interaction is required for the assembly of the RNA endonuclease subcomplex. Interacts with ESRRB, ESRRB is not a core component of the Integrator complex and this association is a bridge for the interaction with the multiprotein complex Integrator; attracts the transcriptional machinery.

It is found in the nucleus. The protein localises to the cytoplasm. Component of the integrator complex, a multiprotein complex that terminates RNA polymerase II (Pol II) transcription in the promoter-proximal region of genes. The integrator complex provides a quality checkpoint during transcription elongation by driving premature transcription termination of transcripts that are unfavorably configured for transcriptional elongation: the complex terminates transcription by (1) catalyzing dephosphorylation of the C-terminal domain (CTD) of Pol II subunit POLR2A/RPB1 and SUPT5H/SPT5, (2) degrading the exiting nascent RNA transcript via endonuclease activity and (3) promoting the release of Pol II from bound DNA. The integrator complex is also involved in terminating the synthesis of non-coding Pol II transcripts, such as enhancer RNAs (eRNAs), small nuclear RNAs (snRNAs), telomerase RNAs and long non-coding RNAs (lncRNAs). Mediates recruitment of cytoplasmic dynein to the nuclear envelope, probably as component of the integrator complex. The protein is Integrator complex subunit 9 of Homo sapiens (Human).